The primary structure comprises 1054 residues: Carbamoyl phosphate synthase large chain (1054 aa).

The segment at 1–402 (MPRRDDIRSI…SLLKAMASLE (402 aa)) is carboxyphosphate synthetic domain. ATP is bound by residues R129, R169, G175, G176, R208, V210, E215, G241, V242, H243, Q285, and E299. Positions 133-328 (REAMERIGLR…IAKIAARLAV (196 aa)) constitute an ATP-grasp 1 domain. The Mg(2+) site is built by Q285, E299, and N301. Q285, E299, and N301 together coordinate Mn(2+). The segment at 403 to 531 (IETRDIQARL…YYYSTYEQED (129 aa)) is oligomerization domain. The tract at residues 532-914 (EVERGENPSV…AFAKALAAAG (383 aa)) is carbamoyl phosphate synthetic domain. In terms of domain architecture, ATP-grasp 2 spans 658-849 (GRLLRELGIP…LARLATRVLL (192 aa)). 9 residues coordinate ATP: R694, K733, E740, G765, V766, H767, S768, Q808, and E820. Q808, E820, and N822 together coordinate Mg(2+). Q808, E820, and N822 together coordinate Mn(2+). The MGS-like domain maps to 915–1054 (QRLPESGRVY…SLQDLYAART (140 aa)). The interval 915–1054 (QRLPESGRVY…SLQDLYAART (140 aa)) is allosteric domain.

Belongs to the CarB family. As to quaternary structure, composed of two chains; the small (or glutamine) chain promotes the hydrolysis of glutamine to ammonia, which is used by the large (or ammonia) chain to synthesize carbamoyl phosphate. Tetramer of heterodimers (alpha,beta)4. Mg(2+) is required as a cofactor. The cofactor is Mn(2+).

The enzyme catalyses hydrogencarbonate + L-glutamine + 2 ATP + H2O = carbamoyl phosphate + L-glutamate + 2 ADP + phosphate + 2 H(+). It catalyses the reaction hydrogencarbonate + NH4(+) + 2 ATP = carbamoyl phosphate + 2 ADP + phosphate + 2 H(+). Its pathway is amino-acid biosynthesis; L-arginine biosynthesis; carbamoyl phosphate from bicarbonate: step 1/1. It functions in the pathway pyrimidine metabolism; UMP biosynthesis via de novo pathway; (S)-dihydroorotate from bicarbonate: step 1/3. Large subunit of the glutamine-dependent carbamoyl phosphate synthetase (CPSase). CPSase catalyzes the formation of carbamoyl phosphate from the ammonia moiety of glutamine, carbonate, and phosphate donated by ATP, constituting the first step of 2 biosynthetic pathways, one leading to arginine and/or urea and the other to pyrimidine nucleotides. The large subunit (synthetase) binds the substrates ammonia (free or transferred from glutamine from the small subunit), hydrogencarbonate and ATP and carries out an ATP-coupled ligase reaction, activating hydrogencarbonate by forming carboxy phosphate which reacts with ammonia to form carbamoyl phosphate. The polypeptide is Carbamoyl phosphate synthase large chain (Rubrobacter xylanophilus (strain DSM 9941 / JCM 11954 / NBRC 16129 / PRD-1)).